The sequence spans 176 residues: NAD(P)H-quinone oxidoreductase subunit J (176 aa).

This sequence belongs to the complex I 30 kDa subunit family. In terms of assembly, NDH-1 can be composed of about 15 different subunits; different subcomplexes with different compositions have been identified which probably have different functions.

It localises to the cellular thylakoid membrane. It catalyses the reaction a plastoquinone + NADH + (n+1) H(+)(in) = a plastoquinol + NAD(+) + n H(+)(out). The enzyme catalyses a plastoquinone + NADPH + (n+1) H(+)(in) = a plastoquinol + NADP(+) + n H(+)(out). Its function is as follows. NDH-1 shuttles electrons from an unknown electron donor, via FMN and iron-sulfur (Fe-S) centers, to quinones in the respiratory and/or the photosynthetic chain. The immediate electron acceptor for the enzyme in this species is believed to be plastoquinone. Couples the redox reaction to proton translocation, and thus conserves the redox energy in a proton gradient. Cyanobacterial NDH-1 also plays a role in inorganic carbon-concentration. The protein is NAD(P)H-quinone oxidoreductase subunit J of Nostoc punctiforme (strain ATCC 29133 / PCC 73102).